A 75-amino-acid polypeptide reads, in one-letter code: Rugosin-LK2 (75 aa).

Positions 1–24 (MFTMKKSLLFLFFLGTISLSFCEG) are cleaved as a signal peptide. Residues 25–40 (ERSADEDDEGEMTEEE) constitute a propeptide that is removed on maturation.

In terms of tissue distribution, expressed by the skin glands.

It is found in the secreted. Its function is as follows. Has antimicrobial activity against Gram-positive bacteria S.aureus ATCC 2592 (MIC=10.0 uM), S.aureus ATCC 43300 (MIC=10.0 uM) and B.subtilis (MIC=30.0 uM), against Gram-negative bacteria E.coli ML-35P (MIC=10.0 uM), P.aeruginosa PA01 (MIC=2.5 uM) and P.aeruginosa ATCC 27853 (MIC=2.5 uM) and against fungus C.albicans ATCC 2002 (MIC=10.0 uM). The sequence is that of Rugosin-LK2 from Limnonectes kuhlii (Kuhl's Creek frog).